Reading from the N-terminus, the 102-residue chain is MANQKIRIRLKAFDHNILDQSAEKIVETAKNTGAKVAGPVPLPTEKDVVTILRATHKYKDSREQFEIRTHKRLIDILSPSPKTVDALMRLDLPAGVDIEIKL.

This sequence belongs to the universal ribosomal protein uS10 family. In terms of assembly, part of the 30S ribosomal subunit.

Involved in the binding of tRNA to the ribosomes. The protein is Small ribosomal subunit protein uS10 of Clostridium novyi (strain NT).